The sequence spans 426 residues: Serine--tRNA ligase (426 aa).

Residue 231–233 (TAE) coordinates L-serine. An ATP-binding site is contributed by 262-264 (RSE). Position 285 (glutamate 285) interacts with L-serine. 349 to 352 (EISS) provides a ligand contact to ATP. Position 384 (serine 384) interacts with L-serine.

This sequence belongs to the class-II aminoacyl-tRNA synthetase family. Type-1 seryl-tRNA synthetase subfamily. As to quaternary structure, homodimer. The tRNA molecule binds across the dimer.

The protein resides in the cytoplasm. The enzyme catalyses tRNA(Ser) + L-serine + ATP = L-seryl-tRNA(Ser) + AMP + diphosphate + H(+). The catalysed reaction is tRNA(Sec) + L-serine + ATP = L-seryl-tRNA(Sec) + AMP + diphosphate + H(+). Its pathway is aminoacyl-tRNA biosynthesis; selenocysteinyl-tRNA(Sec) biosynthesis; L-seryl-tRNA(Sec) from L-serine and tRNA(Sec): step 1/1. Its function is as follows. Catalyzes the attachment of serine to tRNA(Ser). Is also able to aminoacylate tRNA(Sec) with serine, to form the misacylated tRNA L-seryl-tRNA(Sec), which will be further converted into selenocysteinyl-tRNA(Sec). In Laribacter hongkongensis (strain HLHK9), this protein is Serine--tRNA ligase.